Here is a 414-residue protein sequence, read N- to C-terminus: Glucose-1-phosphate adenylyltransferase (414 aa).

Alpha-D-glucose 1-phosphate-binding positions include Y99, G164, 181-182, and S199; that span reads EK.

This sequence belongs to the bacterial/plant glucose-1-phosphate adenylyltransferase family. As to quaternary structure, homotetramer.

It carries out the reaction alpha-D-glucose 1-phosphate + ATP + H(+) = ADP-alpha-D-glucose + diphosphate. The protein operates within glycan biosynthesis; glycogen biosynthesis. In terms of biological role, involved in the biosynthesis of ADP-glucose, a building block required for the elongation reactions to produce glycogen. Catalyzes the reaction between ATP and alpha-D-glucose 1-phosphate (G1P) to produce pyrophosphate and ADP-Glc. The polypeptide is Glucose-1-phosphate adenylyltransferase (Bifidobacterium adolescentis (strain ATCC 15703 / DSM 20083 / NCTC 11814 / E194a)).